A 218-amino-acid chain; its full sequence is Small ribosomal subunit protein uS3 (218 aa).

One can recognise a KH type-2 domain in the interval 38–107 (VREYIEKRLK…RVHVNVVEVK (70 aa)).

The protein belongs to the universal ribosomal protein uS3 family. As to quaternary structure, part of the 30S ribosomal subunit. Forms a tight complex with proteins S10 and S14.

Binds the lower part of the 30S subunit head. Binds mRNA in the 70S ribosome, positioning it for translation. The protein is Small ribosomal subunit protein uS3 of Exiguobacterium sibiricum (strain DSM 17290 / CCUG 55495 / CIP 109462 / JCM 13490 / 255-15).